Here is a 585-residue protein sequence, read N- to C-terminus: Arginine--tRNA ligase (585 aa).

The short motif at Ala-131–His-141 is the 'HIGH' region element.

Belongs to the class-I aminoacyl-tRNA synthetase family. As to quaternary structure, monomer.

Its subcellular location is the cytoplasm. It catalyses the reaction tRNA(Arg) + L-arginine + ATP = L-arginyl-tRNA(Arg) + AMP + diphosphate. In Bartonella tribocorum (strain CIP 105476 / IBS 506), this protein is Arginine--tRNA ligase.